The following is a 258-amino-acid chain: uncharacterized protein (258 aa).

Residues 163–187 form a helical membrane-spanning segment; that stretch reads GIVGAAGLMLMFADLNGIPGICLMG.

Its subcellular location is the membrane. This is an uncharacterized protein from Methanocaldococcus jannaschii (strain ATCC 43067 / DSM 2661 / JAL-1 / JCM 10045 / NBRC 100440) (Methanococcus jannaschii).